Consider the following 768-residue polypeptide: DNA ligase (768 aa).

Residues 61–65, 110–111, and Glu146 contribute to the NAD(+) site; these read DAEFD and SL. Lys148 (N6-AMP-lysine intermediate) is an active-site residue. Residues Arg169, Glu206, Lys322, and Lys346 each coordinate NAD(+). Zn(2+) is bound by residues Cys443, Cys446, Cys462, and Cys468. One can recognise a BRCT domain in the interval 661–750; sequence SVPRTLEGLT…PAQTGTEAEA (90 aa). The disordered stretch occupies residues 739–768; sequence NGPAQTGTEAEAATDEATVVDETAAEAATE. The span at 746 to 768 shows a compositional bias: low complexity; the sequence is TEAEAATDEATVVDETAAEAATE.

The protein belongs to the NAD-dependent DNA ligase family. LigA subfamily. Mg(2+) serves as cofactor. Requires Mn(2+) as cofactor.

The enzyme catalyses NAD(+) + (deoxyribonucleotide)n-3'-hydroxyl + 5'-phospho-(deoxyribonucleotide)m = (deoxyribonucleotide)n+m + AMP + beta-nicotinamide D-nucleotide.. In terms of biological role, DNA ligase that catalyzes the formation of phosphodiester linkages between 5'-phosphoryl and 3'-hydroxyl groups in double-stranded DNA using NAD as a coenzyme and as the energy source for the reaction. It is essential for DNA replication and repair of damaged DNA. In Paenarthrobacter aurescens (strain TC1), this protein is DNA ligase.